The sequence spans 545 residues: Thermosome subunit alpha (545 aa).

The protein belongs to the TCP-1 chaperonin family. Forms a Heterooligomeric complex of two stacked eight-membered rings.

Molecular chaperone; binds unfolded polypeptides in vitro, and has a weak ATPase activity. This Archaeoglobus fulgidus (strain ATCC 49558 / DSM 4304 / JCM 9628 / NBRC 100126 / VC-16) protein is Thermosome subunit alpha (thsA).